Consider the following 464-residue polypeptide: Keratin, type I cytoskeletal 28 (464 aa).

Residues Met-1–Asn-85 are head. The interval Glu-86 to Trp-121 is coil 1A. Residues Glu-86–Cys-401 form the IF rod domain. The interval Tyr-122–Thr-143 is linker 1. The tract at residues Ile-144–Leu-235 is coil 1B. The tract at residues Gln-236–Leu-258 is linker 12. Residues Leu-259–Asp-397 are coil 2. The tract at residues Gly-398–Phe-464 is tail. Residues Ile-443 to Phe-464 form a disordered region.

Belongs to the intermediate filament family. As to quaternary structure, heterotetramer of two type I and two type II keratins. As to expression, strongly expressed in skin and scalp, and weak expression observed in thymus. In the hair follicle, expressed in Henle layer, Huxley layer and in the irs cuticle. Expression extends from the bulb region up to the point of differentiation into the three layers. Also present in the medulla of beard hair (at protein level).

It localises to the cytoplasm. Functionally, essential for the proper assembly of types I and II keratin protein complexes and the formation of keratin intermediate filaments in the inner root sheath (irs). The protein is Keratin, type I cytoskeletal 28 of Homo sapiens (Human).